Reading from the N-terminus, the 334-residue chain is Aspartate carbamoyltransferase catalytic subunit (334 aa).

Residues Arg71 and Thr72 each contribute to the carbamoyl phosphate site. Residue Lys99 coordinates L-aspartate. The carbamoyl phosphate site is built by Arg121, His151, and Gln154. L-aspartate is bound by residues Arg184 and Arg239. Carbamoyl phosphate contacts are provided by Gly280 and Pro281.

Belongs to the aspartate/ornithine carbamoyltransferase superfamily. ATCase family. Heterododecamer (2C3:3R2) of six catalytic PyrB chains organized as two trimers (C3), and six regulatory PyrI chains organized as three dimers (R2).

It carries out the reaction carbamoyl phosphate + L-aspartate = N-carbamoyl-L-aspartate + phosphate + H(+). Its pathway is pyrimidine metabolism; UMP biosynthesis via de novo pathway; (S)-dihydroorotate from bicarbonate: step 2/3. Its function is as follows. Catalyzes the condensation of carbamoyl phosphate and aspartate to form carbamoyl aspartate and inorganic phosphate, the committed step in the de novo pyrimidine nucleotide biosynthesis pathway. This Pseudomonas syringae pv. syringae (strain B728a) protein is Aspartate carbamoyltransferase catalytic subunit.